Reading from the N-terminus, the 449-residue chain is 3-phosphoshikimate 1-carboxyvinyltransferase (449 aa).

A disordered region spans residues 1–26 (MNHHLPSRPARSRQSQGLKGNLRVPG). 3-phosphoshikimate-binding residues include K28, S29, and R33. Phosphoenolpyruvate is bound at residue K28. The phosphoenolpyruvate site is built by G100 and R128. Residues S174, Q176, D327, and K354 each contribute to the 3-phosphoshikimate site. Q176 is a phosphoenolpyruvate binding site. D327 serves as the catalytic Proton acceptor. Positions 358 and 403 each coordinate phosphoenolpyruvate.

This sequence belongs to the EPSP synthase family. In terms of assembly, monomer.

The protein resides in the cytoplasm. It carries out the reaction 3-phosphoshikimate + phosphoenolpyruvate = 5-O-(1-carboxyvinyl)-3-phosphoshikimate + phosphate. Its pathway is metabolic intermediate biosynthesis; chorismate biosynthesis; chorismate from D-erythrose 4-phosphate and phosphoenolpyruvate: step 6/7. Catalyzes the transfer of the enolpyruvyl moiety of phosphoenolpyruvate (PEP) to the 5-hydroxyl of shikimate-3-phosphate (S3P) to produce enolpyruvyl shikimate-3-phosphate and inorganic phosphate. The protein is 3-phosphoshikimate 1-carboxyvinyltransferase of Chelativorans sp. (strain BNC1).